An 861-amino-acid polypeptide reads, in one-letter code: Leucine--tRNA ligase (861 aa).

The 'HIGH' region signature appears at 42–52 (PYPSGKLHMGH). Residues 619–623 (KMSKS) carry the 'KMSKS' region motif. Residue Lys622 participates in ATP binding.

The protein belongs to the class-I aminoacyl-tRNA synthetase family.

It localises to the cytoplasm. It catalyses the reaction tRNA(Leu) + L-leucine + ATP = L-leucyl-tRNA(Leu) + AMP + diphosphate. The protein is Leucine--tRNA ligase of Actinobacillus pleuropneumoniae serotype 5b (strain L20).